The sequence spans 472 residues: Pyruvate kinase (472 aa).

A substrate-binding site is contributed by R33. The K(+) site is built by N35, S37, and D67. 35 to 38 (NFSH) is an ATP binding site. R74 and K155 together coordinate ATP. E220 serves as a coordination point for Mg(2+). Residues G243, D244, and T276 each contribute to the substrate site. Position 244 (D244) interacts with Mg(2+).

It belongs to the pyruvate kinase family. Homotetramer. Mg(2+) serves as cofactor. Requires K(+) as cofactor.

The catalysed reaction is pyruvate + ATP = phosphoenolpyruvate + ADP + H(+). Its pathway is carbohydrate degradation; glycolysis; pyruvate from D-glyceraldehyde 3-phosphate: step 5/5. The chain is Pyruvate kinase (pyk) from Mycobacterium intracellulare.